We begin with the raw amino-acid sequence, 1481 residues long: Cystic fibrosis transmembrane conductance regulator (1481 aa).

Topologically, residues 1–77 (MQRSPLEKAS…KLINALRRCF (77 aa)) are cytoplasmic. Residues 78–98 (FWRFTFYGILLYLGEVTKAVQ) form a helical membrane-spanning segment. The region spanning 81-365 (FTFYGILLYL…WAVQTWYDSL (285 aa)) is the ABC transmembrane type-1 1 domain. Residues 99-122 (PLLLGRIIASYDPDNKTERSIAIY) are Extracellular-facing. Residues 123–146 (LGIGLCLLFIVRTLLLHPAIFGLH) traverse the membrane as a helical segment. Residues 147-195 (HIGMQMRIAMFSLIYKKTLKLSSRVLDKISIGQLVSLLSNNLNKFDEGL) lie on the Cytoplasmic side of the membrane. The chain crosses the membrane as a helical span at residues 196–216 (ALAHFVWIAPLQVALLMGLIW). Topologically, residues 217–222 (ELLQAS) are extracellular. A helical membrane pass occupies residues 223–243 (AFCGLGFLIVLALFQAGLGRM). The Cytoplasmic portion of the chain corresponds to 244–298 (MMKYRDQRAGKINERLVITSEMIENIQSVKAYCWEEAMEKMIENLRQTELKLTRK). A helical membrane pass occupies residues 299–319 (AAYVRYFNSSAFFFSGFFVVF). The Extracellular segment spans residues 320-339 (LSVLPYALIKGIILRKIFTT). Residues 340-358 (ISFCIVLRMAVTRQFPWAV) form a helical membrane-spanning segment. Over 359 to 858 (QTWYDSLGAI…YLRYITLHKS (500 aa)) the chain is Cytoplasmic. ATP-binding positions include W401, S434, 458–465 (GSTGAGKT), and Q493. An ABC transporter 1 domain is found at 423 to 646 (NDDNNLFFSN…RPDFSSKLMG (224 aa)). C524 carries S-palmitoyl cysteine lipidation. 2 positions are modified to phosphoserine: S549 and S660. The disordered R region stretch occupies residues 654-831 (SSERRNSILT…EEINEEDLKE (178 aa)). S670 carries the phosphoserine; by PKA modification. S686 bears the Phosphoserine mark. A Glycyl lysine isopeptide (Lys-Gly) (interchain with G-Cter in ubiquitin) cross-link involves residue K688. 2 positions are modified to phosphoserine: S700 and S712. T717 carries the post-translational modification Phosphothreonine. Phosphoserine is present on residues S737, S753, S768, S790, S795, and S813. The helical transmembrane segment at 859–879 (LIFVLIWCLVIFLAEVAASLV) threads the bilayer. The region spanning 859-1155 (LIFVLIWCLV…AVNSSIDVDS (297 aa)) is the ABC transmembrane type-1 2 domain. The Extracellular segment spans residues 880 to 918 (VLWLLRNTPFQDKGNSTYSRNNSYAVIITNTSSYYVFYI). N-linked (GlcNAc...) asparagine glycosylation is found at N894, N900, and N909. Residues 919 to 939 (YVGVADTLLALGFFRGLPLVH) traverse the membrane as a discontinuously helical segment. The Cytoplasmic segment spans residues 940–990 (TLITVSKILHHKMLHSVLQAPMSTLNTLKAGGILNRFSKDIAILDDLLPLT). The chain crosses the membrane as a helical span at residues 991–1011 (IFDFIQLLLIVIGAIAVVSVL). The Extracellular segment spans residues 1012–1013 (QP). A helical transmembrane segment spans residues 1014–1034 (YIFLATVPVIAAFVLLRAYFL). At 1035-1095 (QTSQQLKQLE…TANWFLYLST (61 aa)) the chain is on the cytoplasmic side. A helical transmembrane segment spans residues 1096–1116 (LRWFQMRIEMIFVIFFIAVTF). Topologically, residues 1117–1130 (ISILTTGEGEGTVG) are extracellular. A helical transmembrane segment spans residues 1131–1151 (IILTLAMNIMSTLQWAVNSSI). Residues 1152 to 1481 (DVDSLMRSVS…TEEEVQETRL (330 aa)) are Cytoplasmic-facing. Residues 1211–1444 (MTIKDLTAKY…KSLFRQAISH (234 aa)) form the ABC transporter 2 domain. Residues Y1220 and 1245–1252 (GRTGSGKS) contribute to the ATP site. The tract at residues 1387–1481 (RALKQAFADC…TEEEVQETRL (95 aa)) is interaction with GORASP2. C1396 carries the S-palmitoyl cysteine lipid modification. Phosphoserine occurs at positions 1445 and 1457. The segment at 1453–1481 (HRNSSKYKSRPQIASLKEETEEEVQETRL) is disordered. The segment covering 1471–1481 (ETEEEVQETRL) has biased composition (acidic residues). The short motif at 1479–1481 (TRL) is the PDZ-binding element.

The protein belongs to the ABC transporter superfamily. ABCC family. CFTR transporter (TC 3.A.1.202) subfamily. In terms of assembly, monomer; does not require oligomerization for channel activity. May form oligomers in the membrane. Interacts with SLC26A3, SLC26A6 and NHERF1. Interacts with SHANK2. Interacts with MYO6. Interacts (via C-terminus) with GOPC (via PDZ domain); this promotes CFTR internalization and thereby decreases channel activity. Interacts with SLC4A7 through NHERF1. Found in a complex with MYO5B and RAB11A. Interacts with ANO1. Interacts with SLC26A8. Interacts with AHCYL1; the interaction increases CFTR activity. Interacts with CSE1L. The core-glycosylated form interacts with GORASP2 (via PDZ GRASP-type 1 domain) in respone to ER stress. Interacts with MARCHF2; the interaction leads to CFTR ubiqtuitination and degradation. Interacts with ADGRG2. In terms of processing, N-glycosylated. Phosphorylated; cAMP treatment promotes phosphorylation and activates the channel. Dephosphorylation decreases the ATPase activity (in vitro). Phosphorylation at PKA sites activates the channel. Phosphorylation at PKC sites enhances the response to phosphorylation by PKA. Phosphorylated by AMPK; this inhibits channel activity. Post-translationally, ubiquitinated, leading to its degradation in the lysosome. Deubiquitination by USP10 in early endosomes enhances its endocytic recycling to the cell membrane. Ubiquitinated by RNF185 during ER stress. Ubiquitinated by MARCHF2.

The protein localises to the apical cell membrane. It localises to the early endosome membrane. It is found in the cell membrane. Its subcellular location is the recycling endosome membrane. The protein resides in the endoplasmic reticulum membrane. The protein localises to the nucleus. It catalyses the reaction ATP + H2O + closed Cl(-) channel = ADP + phosphate + open Cl(-) channel.. The catalysed reaction is chloride(in) = chloride(out). It carries out the reaction hydrogencarbonate(in) = hydrogencarbonate(out). The enzyme catalyses ATP + H2O = ADP + phosphate + H(+). In terms of biological role, epithelial ion channel that plays an important role in the regulation of epithelial ion and water transport and fluid homeostasis. Mediates the transport of chloride ions across the cell membrane. Possesses an intrinsic ATPase activity and utilizes ATP to gate its channel; the passive flow of anions through the channel is gated by cycles of ATP binding and hydrolysis by the ATP-binding domains. The ion channel is also permeable to HCO(3)(-); selectivity depends on the extracellular chloride concentration. Exerts its function also by modulating the activity of other ion channels and transporters. Contributes to the regulation of the pH and the ion content of the epithelial fluid layer. Modulates the activity of the epithelial sodium channel (ENaC) complex, in part by regulating the cell surface expression of the ENaC complex. May regulate bicarbonate secretion and salvage in epithelial cells by regulating the transporter SLC4A7. Can inhibit the chloride channel activity of ANO1. Plays a role in the chloride and bicarbonate homeostasis during sperm epididymal maturation and capacitation. This Callithrix jacchus (White-tufted-ear marmoset) protein is Cystic fibrosis transmembrane conductance regulator.